The sequence spans 1025 residues: Multidrug resistance protein MdtC (1025 aa).

12 helical membrane-spanning segments follow: residues 3-23 (FFALFIYRPVATILLSVAITL), 333-353 (EVEQTLIISVALVILVVFLFL), 360-380 (IIPAVAVPVSLIGTFAAMYLC), 387-407 (LSLMALTIATGFVVDDAIVVL), 431-451 (VGFTVLSMSLSLVAVFLPLLL), 463-483 (FAVTLSVAIVISLLVSLTLTP), 528-548 (LVGVVLLGTIALNIWLYISIP), 853-873 (VILIIAAIATVYIVLGILYES), 875-895 (VHPLTILSTLPSAGVGALLAL), 897-917 (LFNAPFSLIALIGIMLLIGIV), 953-973 (PIMMTTLAALFGALPLVLSGG), and 984-1004 (ITIVGGLVMSQLLTLYTTPVV).

The protein belongs to the resistance-nodulation-cell division (RND) (TC 2.A.6) family. MdtC subfamily. Part of a tripartite efflux system composed of MdtA, MdtB and MdtC. MdtC forms a heteromultimer with MdtB.

The protein resides in the cell inner membrane. Its function is as follows. The MdtABC tripartite complex confers resistance against novobiocin and deoxycholate. The protein is Multidrug resistance protein MdtC of Escherichia coli O139:H28 (strain E24377A / ETEC).